We begin with the raw amino-acid sequence, 488 residues long: Bifunctional protein HldE (488 aa).

Positions 1 to 327 (MDDTLAKLPR…GLAHGEHADP (327 aa)) are ribokinase. 201 to 204 (NRRE) provides a ligand contact to ATP. Residue Asp272 is part of the active site. A cytidylyltransferase region spans residues 354 to 488 (FTNGCFDLLH…GRMNAPAVGG (135 aa)).

In the N-terminal section; belongs to the carbohydrate kinase PfkB family. This sequence in the C-terminal section; belongs to the cytidylyltransferase family. As to quaternary structure, homodimer.

The catalysed reaction is D-glycero-beta-D-manno-heptose 7-phosphate + ATP = D-glycero-beta-D-manno-heptose 1,7-bisphosphate + ADP + H(+). It carries out the reaction D-glycero-beta-D-manno-heptose 1-phosphate + ATP + H(+) = ADP-D-glycero-beta-D-manno-heptose + diphosphate. It functions in the pathway nucleotide-sugar biosynthesis; ADP-L-glycero-beta-D-manno-heptose biosynthesis; ADP-L-glycero-beta-D-manno-heptose from D-glycero-beta-D-manno-heptose 7-phosphate: step 1/4. The protein operates within nucleotide-sugar biosynthesis; ADP-L-glycero-beta-D-manno-heptose biosynthesis; ADP-L-glycero-beta-D-manno-heptose from D-glycero-beta-D-manno-heptose 7-phosphate: step 3/4. Catalyzes the phosphorylation of D-glycero-D-manno-heptose 7-phosphate at the C-1 position to selectively form D-glycero-beta-D-manno-heptose-1,7-bisphosphate. Functionally, catalyzes the ADP transfer from ATP to D-glycero-beta-D-manno-heptose 1-phosphate, yielding ADP-D-glycero-beta-D-manno-heptose. This is Bifunctional protein HldE from Caulobacter sp. (strain K31).